We begin with the raw amino-acid sequence, 80 residues long: Translation initiation factor IF-1 (80 aa).

An S1-like domain is found at 6 to 80 (EKRKKEESDV…TSRGRIVYRK (75 aa)).

It belongs to the IF-1 family. Component of the 30S ribosomal translation pre-initiation complex which assembles on the 30S ribosome in the order IF-2 and IF-3, IF-1 and N-formylmethionyl-tRNA(fMet); mRNA recruitment can occur at any time during PIC assembly.

It localises to the cytoplasm. Functionally, one of the essential components for the initiation of protein synthesis. Stabilizes the binding of IF-2 and IF-3 on the 30S subunit to which N-formylmethionyl-tRNA(fMet) subsequently binds. Helps modulate mRNA selection, yielding the 30S pre-initiation complex (PIC). Upon addition of the 50S ribosomal subunit IF-1, IF-2 and IF-3 are released leaving the mature 70S translation initiation complex. This Deinococcus geothermalis (strain DSM 11300 / CIP 105573 / AG-3a) protein is Translation initiation factor IF-1.